The primary structure comprises 270 residues: Putative pyruvate, phosphate dikinase regulatory protein 1 (270 aa).

Residue 151 to 158 (GVSRTSKT) coordinates ADP.

The protein belongs to the pyruvate, phosphate/water dikinase regulatory protein family. PDRP subfamily.

It catalyses the reaction N(tele)-phospho-L-histidyl/L-threonyl-[pyruvate, phosphate dikinase] + ADP = N(tele)-phospho-L-histidyl/O-phospho-L-threonyl-[pyruvate, phosphate dikinase] + AMP + H(+). The enzyme catalyses N(tele)-phospho-L-histidyl/O-phospho-L-threonyl-[pyruvate, phosphate dikinase] + phosphate + H(+) = N(tele)-phospho-L-histidyl/L-threonyl-[pyruvate, phosphate dikinase] + diphosphate. Bifunctional serine/threonine kinase and phosphorylase involved in the regulation of the pyruvate, phosphate dikinase (PPDK) by catalyzing its phosphorylation/dephosphorylation. The chain is Putative pyruvate, phosphate dikinase regulatory protein 1 from Enterococcus faecalis (strain ATCC 700802 / V583).